A 362-amino-acid polypeptide reads, in one-letter code: Putative sphingolipid delta(4)-desaturase/C4-monooxygenase (362 aa).

The next 3 membrane-spanning stretches (helical) occupy residues 45-61 (YVVS…CWLL), 71-91 (LEAY…IHDI), and 107-127 (FFGM…FKKY). Residues 89–93 (HDISH) carry the Histidine box-1 motif. Residues 128–132 (HVEHH) carry the Histidine box-2 motif. Transmembrane regions (helical) follow at residues 160 to 177 (LLWL…PLII) and 198 to 218 (LLIL…GTII). The Histidine box-3 motif lies at 259–263 (HVEHH).

This sequence belongs to the fatty acid desaturase type 1 family. DEGS subfamily.

The protein localises to the membrane. It carries out the reaction an N-acyl-15-methylhexadecasphinganine + 2 Fe(II)-[cytochrome b5] + O2 + 2 H(+) = an N-acyl-4-hydroxy-15-methylhexadecasphinganine + 2 Fe(III)-[cytochrome b5] + H2O. The catalysed reaction is an N-acyl-15-methylhexadecasphinganine + 2 Fe(II)-[cytochrome b5] + O2 + 2 H(+) = an N-acyl-15-methylhexadecasphing-4-enine + 2 Fe(III)-[cytochrome b5] + 2 H2O. The enzyme catalyses a dihydroceramide + 2 Fe(II)-[cytochrome b5] + O2 + 2 H(+) = a phytoceramide + 2 Fe(III)-[cytochrome b5] + H2O. It catalyses the reaction an N-acylsphinganine + 2 Fe(II)-[cytochrome b5] + O2 + 2 H(+) = an N-acylsphing-4-enine + 2 Fe(III)-[cytochrome b5] + 2 H2O. It carries out the reaction N-octanoylsphinganine + 2 Fe(II)-[cytochrome b5] + O2 + 2 H(+) = N-octanoyl-4-hydroxysphinganine + 2 Fe(III)-[cytochrome b5] + H2O. The catalysed reaction is an N-acylsphinganine + 2 Fe(II)-[cytochrome b5] + O2 + 2 H(+) = an N-acyl-(4R)-4-hydroxysphinganine + 2 Fe(III)-[cytochrome b5] + H2O. It participates in lipid metabolism; sphingolipid metabolism. In terms of biological role, bifunctional enzyme which acts both as a sphingolipid delta(4)-desaturase and a sphingolipid C4-monooxygenase. C.elegans contain specific sphingoid bases, which are unique or different in structure compared to the sphingoid bases found in other animals. Two examples of these distinctive compounds are: 15-methylhexadecasphinganine and 15-methylhexadecasphing-4-enine and this enzyme can catalyze their conversion. The polypeptide is Putative sphingolipid delta(4)-desaturase/C4-monooxygenase (ttm-5) (Caenorhabditis elegans).